Consider the following 312-residue polypeptide: Serine/threonine-protein phosphatase CPPED1 (312 aa).

Serine 2 bears the Phosphoserine mark. The interval 47–250 is catalytic; that stretch reads KAWSTGNCDA…AVFSGHYHRN (204 aa). Positions 90, 127, and 246 each coordinate a divalent metal cation. Residue serine 293 is modified to Phosphoserine.

Belongs to the metallophosphoesterase superfamily. CPPED1 family. The cofactor is a divalent metal cation.

It localises to the cytoplasm. It catalyses the reaction O-phospho-L-seryl-[protein] + H2O = L-seryl-[protein] + phosphate. It carries out the reaction O-phospho-L-threonyl-[protein] + H2O = L-threonyl-[protein] + phosphate. Protein phosphatase that dephosphorylates AKT family kinase specifically at 'Ser-473', blocking cell cycle progression and promoting cell apoptosis. May play an inhibitory role in glucose uptake by adipocytes. This Mus musculus (Mouse) protein is Serine/threonine-protein phosphatase CPPED1 (Cpped1).